The chain runs to 488 residues: Bile acid receptor (488 aa).

Lysine 133 is covalently cross-linked (Glycyl lysine isopeptide (Lys-Gly) (interchain with G-Cter in SUMO1)). The nuclear receptor DNA-binding region spans 135–210; it reads DELCVVCGDR…MGMLAECMYT (76 aa). Residues 138 to 158 form an NR C4-type zinc finger; it reads CVVCGDRASGYHYNALTCEGC. Residues serine 146 and serine 165 each carry the phosphoserine; by PKC/PRKCA modification. An N6-acetyllysine; by EP300 modification is found at lysine 168. The segment at 174–198 adopts an NR C4-type zinc-finger fold; sequence CKNGGNCVMDMYMRRKCQECRLRKC. Lysine 221 is modified (N6-methyllysine; by SETD7). The residue at position 228 (lysine 228) is an N6-acetyllysine; by EP300. Positions 264-488 constitute an NR LBD domain; sequence DQQTLLDYIM…PLLCEIWDVQ (225 aa). Lysine 291 is covalently cross-linked (Glycyl lysine isopeptide (Lys-Gly) (interchain with G-Cter in SUMO1)). Chenodeoxycholate-binding residues include arginine 347, tyrosine 377, and tyrosine 385. Position 458 is a phosphothreonine; by PKC/PRKCZ (threonine 458). Residue histidine 463 participates in chenodeoxycholate binding.

Belongs to the nuclear hormone receptor family. NR1 subfamily. In terms of assembly, heterodimer with RXRA; the heterodimerization enhances the binding affinity for LXXLL motifs from coactivators. Binds DNA predominantly as a heterodimer with RXRA. After activation by agonist binding interacts with coactivators. Interacts with PPARGC1A, SMARCA4 and EP300. Interacts with NCOA1, NCOA2, CARM1, SETD7, PRMT1, GPS2, SMARCA4 and MED1. Interacts with XRCC5 and XRCC6; decreasing NR1H4/FXR transactivation activity towards ABCB11/BSEP. Interacts with PAGR1 and NCOA6; indicative for an association with an MLL2/MLL3 complex (ASCOM). Interacts with NR5A2. Post-translationally, acetylated by EP300. Lys-228 as is the major acetylation site for EP300; the dynamicly regulated acetylation inhibits heterodimerization with RXRA and transactivation activity. Deacetylated by SIRT1. Elevated acetylation levels are found in metabolic disease states (mouse models of obesity and type II diabetes). In terms of processing, methylation may increase transactivation of target genes. Phosphorylation by PKC/PRKCA increases transactivation activity by promoting association with PPARGC1A. Post-translationally, sumoylated upon ligand binding. As to expression, expressed in liver and kidney. Expressed in pancreatic beta cells and macrophages. Expressed in the villus epithelium in adult ileum, with highest expression in the intervillus regions. Expression in colon is reduced by inflammation.

The protein localises to the nucleus. Its function is as follows. Ligand-activated transcription factor. Receptor for bile acids (BAs) such as chenodeoxycholic acid (CDCA), lithocholic acid, deoxycholic acid (DCA) and allocholic acid (ACA). Plays a essential role in BA homeostasis through the regulation of genes involved in BA synthesis, conjugation and enterohepatic circulation. Also regulates lipid and glucose homeostasis and is involved in innate immune response. The FXR-RXR heterodimer binds predominantly to farnesoid X receptor response elements (FXREs) containing two inverted repeats of the consensus sequence 5'-AGGTCA-3' in which the monomers are spaced by 1 nucleotide (IR-1) but also to tandem repeat DR1 sites with lower affinity, and can be activated by either FXR or RXR-specific ligands. It is proposed that monomeric nuclear receptors such as NR5A2/LRH-1 bound to coregulatory nuclear responsive element (NRE) halfsites located in close proximity to FXREs modulate transcriptional activity. In the liver activates transcription of the corepressor NR0B2 thereby indirectly inhibiting CYP7A1 and CYP8B1 (involved in BA synthesis) implicating at least in part histone demethylase KDM1A resulting in epigenomic repression, and SLC10A1/NTCP (involved in hepatic uptake of conjugated BAs). Activates transcription of the repressor MAFG (involved in regulation of BA synthesis). Activates transcription of SLC27A5/BACS and BAAT (involved in BA conjugation), ABCB11/BSEP (involved in bile salt export) by directly recruiting histone methyltransferase CARM1, and ABCC2/MRP2 (involved in secretion of conjugated BAs) and ABCB4 (involved in secretion of phosphatidylcholine in the small intestine). In ileal enterocytes activates FABP6/IBABP (involved in cytosolic transport), SLC51A/OSTA and SLC51B/OSTB (involved in secretion of conjugated BAs to the portal blood), and repressor NR0B2/SHP thereby indirectly inhibiting SLC10A2/ASBT (involved in BA uptake). In the intestine activates FGF15 expression and secretion leading to hepatic CYP7A1 repression; the function also involves the coordinated induction of hepatic KLB/beta-klotho expression. Transcriptional activation of FABP6/IBAP and SCD1 but not of ABCB11 is isoform-specific. Regulates transcription of liver UGT2B4 and SULT2A1 involved in BA detoxification; binding to the UGT2B4 promoter seems to imply a monomeric transactivation independent of RXRA. Modulates lipid homeostasis by activating liver NR0B2/SHP-mediated repression of SREBF1 isoform SREBP-1C (involved in de novo lipogenesis), expression of PLTP (involved in HDL formation), SCARB1 (involved in HDL hepatic uptake), APOE, APOC1, APOC4, VLDLR and SDC1 (involved in the hepatic uptake of LDL and IDL remnants), and inhibiting expression of MTTP (involved in VLDL assembly). Increases expression of APOC2 (promoting lipoprotein lipase activity implicated in triglyceride clearance). Transrepresses APOA1 probably involving a monomeric competition with NR2A1 for binding to a DR1 element. Also reduces triglyceride clearance by inhibiting expression of ANGPTL3 and APOC3 (both involved in inhibition of lipoprotein lipase). Involved in glucose homeostasis by modulating hepatic gluconeogenesis through activation of NR0B2/SHP-mediated repression of respective genes. Modulates glycogen synthesis (inducing phosphorylation of glycogen synthase kinase-3). Modulates glucose-stimulated insulin secretion and is involved in insulin resistance. Involved in intestinal innate immunity. Plays a role in protecting the distal small intestine against bacterial overgrowth and preservation of the epithelial barrier. Down-regulates inflammatory cytokine expression in several types of immune cells including macrophages and mononuclear cells. Mediates transrepression of TLR4-induced cytokine expression; the function seems to require its sumoylation and prevents N-CoR nuclear receptor corepressor clearance from target genes such as IL1B and NOS2. Involved in the TLR9-mediated protective mechanism in intestinal inflammation. Plays a anti-inflammatory role in liver inflammation; proposed to inhibit pro-inflammatory (but not antiapoptotic) NF-kappa-B signaling. In terms of biological role, activates transcription of IBAP and SDC1. The chain is Bile acid receptor (Nr1h4) from Mus musculus (Mouse).